Here is a 354-residue protein sequence, read N- to C-terminus: MAAGGGRAFAWQVFPPMPTCRVYGTVAHQDGHLLVLGGCGRAGLPLDTAETLDMGSHTWLALAPLPTARAGAAAVVLGKQVLVVGGVDEVQSPVAAVEAFLADEGRWERRATLPQAAMGVATVERDGMVYALGGMGPDTAPQAQVLVYEPRRDCWLSLPSMPTPCYGASTFLHGNKIYVLGGRQGKLPVTAFEAFDLETRTWTRHPSLPSRRAFAGCAMAEGSVFSLGGLQQPGPHNFYSRPHFVNTVEMFDLEHGSWTKLPRSLRMRDKRADFVVGSLGGNIVAIGGLGNQPCPLASVESFSLARRRWEVLPAMPTARCSCSSLQAGPRLFVIGGVAQGPSQAVEALCLRDGV.

Kelch repeat units follow at residues 1–31, 32–79, 81–127, 128–175, 176–222, 224–281, 282–329, and 331–354; these read MAAGGGRAFAWQVFPPMPTCRVYGTVAHQDG, HLLV…VLGK, VLVV…ERDG, MVYA…LHGN, KIYV…MAEG, VFSL…SLGG, NIVA…QAGP, and LFVIGGVAQGPSQAVEALCLRDGV.

It localises to the cytoplasm. The protein resides in the midbody. Involved in pinching off the separated nuclei at the cleavage furrow and in cytokinesis. Required for mitotic integrity and maintenance of chromosomal stability. Protects cells against mitotic errors, centrosomal amplification, micronucleus formation and aneuploidy. Plays a key role of midbody function involving abscission of the daughter cells during cytokinesis and appropriate chromosomal and nuclear segregation into the daughter cells. The protein is Kelch domain-containing protein 8B (Klhdc8b) of Mus musculus (Mouse).